A 450-amino-acid polypeptide reads, in one-letter code: Phosphoglucosamine mutase (450 aa).

Serine 102 serves as the catalytic Phosphoserine intermediate. 4 residues coordinate Mg(2+): serine 102, aspartate 243, aspartate 245, and aspartate 247. Serine 102 is modified (phosphoserine).

Belongs to the phosphohexose mutase family. Mg(2+) serves as cofactor. In terms of processing, activated by phosphorylation.

It catalyses the reaction alpha-D-glucosamine 1-phosphate = D-glucosamine 6-phosphate. Functionally, catalyzes the conversion of glucosamine-6-phosphate to glucosamine-1-phosphate. This Rhizobium leguminosarum bv. trifolii (strain WSM2304) protein is Phosphoglucosamine mutase.